The sequence spans 509 residues: Protein disulfide-isomerase (509 aa).

A signal peptide spans 1 to 19 (MLSRALLCLALAWAARVGA). The Thioredoxin 1 domain occupies 20–136 (DALEEEDNVL…IVNWLKKRTG (117 aa)). Catalysis depends on nucleophile residues cysteine 55 and cysteine 58. Cysteine 55 and cysteine 58 are disulfide-bonded. N6-acetyllysine is present on lysine 202. An N6-succinyllysine mark is found at lysine 224 and lysine 273. A phosphoserine mark is found at serine 333 and serine 359. The Thioredoxin 2 domain maps to 335 to 477 (ELTAEKITQF…FKKFLESGGQ (143 aa)). Residues cysteine 399 and cysteine 402 each act as nucleophile in the active site. A disulfide bridge connects residues cysteine 399 and cysteine 402. Serine 429 carries the post-translational modification Phosphoserine. The Prevents secretion from ER signature appears at 506–509 (KDEL).

This sequence belongs to the protein disulfide isomerase family. As to quaternary structure, heterodimer; heterodimerizes with the protein microsomal triglyceride transfer MTTP. Homodimer. Monomers and homotetramers may also occur. Interacts with P4HA2, forming a heterotetramer consisting of 2 alpha subunits (P4HA2) and 2 beta (P4HB), where P4HB plays the role of a structural subunit; this tetramer catalyzes the formation of 4-hydroxyproline in collagen. Also constitutes the structural subunit of the microsomal triacylglycerol transfer protein MTTP in mammalian cells. Stabilizes both enzymes and retain them in the ER without contributing to the catalytic activity. Binds UBQLN1. Interacts with ERO1B. Interacts with ILDR2. Interacts with ERN1/IRE1A (via N-terminus); the interaction is enhanced by phosphorylation of P4HB by FAM20C in response to endoplasmic reticulum stress and results in attenuation of ERN1 activity. Post-translationally, phosphorylation of Ser-359 by FAM20C is induced by endoplasmic reticulum stress and results in a functional switch from oxidoreductase to molecular chaperone. It also promotes interaction with ERN1.

The protein localises to the endoplasmic reticulum. Its subcellular location is the endoplasmic reticulum lumen. It localises to the melanosome. It is found in the cell membrane. The catalysed reaction is Catalyzes the rearrangement of -S-S- bonds in proteins.. In terms of biological role, this multifunctional protein catalyzes the formation, breakage and rearrangement of disulfide bonds. At the cell surface, seems to act as a reductase that cleaves disulfide bonds of proteins attached to the cell. May therefore cause structural modifications of exofacial proteins. Inside the cell, seems to form/rearrange disulfide bonds of nascent proteins. At high concentrations and following phosphorylation by FAM20C, functions as a chaperone that inhibits aggregation of misfolded proteins. At low concentrations, facilitates aggregation (anti-chaperone activity). May be involved with other chaperones in the structural modification of the TG precursor in hormone biogenesis. Also acts as a structural subunit of various enzymes such as prolyl 4-hydroxylase and microsomal triacylglycerol transfer protein MTTP. Receptor for LGALS9; the interaction retains P4HB at the cell surface of Th2 T helper cells, increasing disulfide reductase activity at the plasma membrane, altering the plasma membrane redox state and enhancing cell migration. The polypeptide is Protein disulfide-isomerase (P4hb) (Rattus norvegicus (Rat)).